A 221-amino-acid chain; its full sequence is Protein-L-isoaspartate O-methyltransferase (221 aa).

Ser64 is an active-site residue.

Belongs to the methyltransferase superfamily. L-isoaspartyl/D-aspartyl protein methyltransferase family.

Its subcellular location is the cytoplasm. The enzyme catalyses [protein]-L-isoaspartate + S-adenosyl-L-methionine = [protein]-L-isoaspartate alpha-methyl ester + S-adenosyl-L-homocysteine. In terms of biological role, catalyzes the methyl esterification of L-isoaspartyl residues in peptides and proteins that result from spontaneous decomposition of normal L-aspartyl and L-asparaginyl residues. It plays a role in the repair and/or degradation of damaged proteins. The chain is Protein-L-isoaspartate O-methyltransferase from Cytophaga hutchinsonii (strain ATCC 33406 / DSM 1761 / CIP 103989 / NBRC 15051 / NCIMB 9469 / D465).